A 365-amino-acid chain; its full sequence is Isoflavone 4'-O-methyltransferase (365 aa).

Residues 207–210 (VAGG), D231, 231–232 (DQ), 251–252 (DM), and K265 each bind S-adenosyl-L-methionine. H269 acts as the Proton acceptor in catalysis.

It belongs to the class I-like SAM-binding methyltransferase superfamily. Cation-independent O-methyltransferase family. COMT subfamily.

It carries out the reaction a 4'-hydroxyisoflavone + S-adenosyl-L-methionine = a 4'-methoxyisoflavone + S-adenosyl-L-homocysteine + H(+). The catalysed reaction is (2R,3S)-2,4',7-trihydroxyisoflavanone + S-adenosyl-L-methionine = (2R,3S)-2,7-dihydroxy-4'-methoxyisoflavanone + S-adenosyl-L-homocysteine + H(+). In terms of biological role, 2-hydroxyisoflavanone 4'-O-methyltransferase involved in the biosynthesis of formononetin. Can use 2,7,4'-trihydroxyisoflavanone as substrate, but not daidzein. The chain is Isoflavone 4'-O-methyltransferase (HI4'OMT) from Lotus japonicus (Lotus corniculatus var. japonicus).